Consider the following 77-residue polypeptide: Small ribosomal subunit protein bS21 (77 aa).

Residues 55–77 (RKLARKRAQREGLMSNGRISALR) form a disordered region.

Belongs to the bacterial ribosomal protein bS21 family.

This is Small ribosomal subunit protein bS21 from Bartonella quintana (strain Toulouse) (Rochalimaea quintana).